Here is a 477-residue protein sequence, read N- to C-terminus: Epoxyalcohol synthase CYP5164B1 (477 aa).

Cysteine 421 contributes to the heme binding site.

It belongs to the cytochrome P450 family. It depends on heme as a cofactor.

The enzyme catalyses (9S)-hydroperoxy-(10E,12Z)-octadecadienoate = (11S)-hydroxy-(9S,10S)-epoxy-(12Z)-octadecenoate. It carries out the reaction (13S)-hydroperoxy-(9Z,11E)-octadecadienoate = 11-hydroxy-12,13-epoxy-(9Z)-octadecenoate. Its pathway is lipid metabolism; oxylipin biosynthesis. Cytochrome P450 epoxyalcohol synthase involved in the metabolism of oxylipins 'ectocarpins' natural products, such as hybridalactone, ecklonilactones and derivatives. Isomerizes the hydroperoxides into epoxyalcohols via epoxyallylic radical. Can use linoleic acid 9-hydroperoxide ((9S,10E,12Z)-9-hydroperoxy-10,12-octadecadienoic, 9-HPOD) as preferred substrate to produce (9S,10S,11S,12Z)-9,10-epoxy-11-hydroxy-12-octadecenoic acid and, to a lower extent, active with linoleate 13-hydroperoxide ((9Z,11E,13S)-13-hydroperoxy-9,11-octadecadienoic, 13-HPOD) to produce 11-hydroxy-12,13-epoxy-9-octadecenoic acid. No activity toward alpha-linolenic acid 9- and 13-hydroperoxides, and toward eicosapentaenoic acid 15-hydroperoxide. The sequence is that of Epoxyalcohol synthase CYP5164B1 from Ectocarpus siliculosus (Brown alga).